The chain runs to 221 residues: GTP cyclohydrolase III (221 aa).

This sequence belongs to the archaeal-type GTP cyclohydrolase family.

The enzyme catalyses GTP + 3 H2O = 2-amino-5-formylamino-6-(5-phospho-D-ribosylamino)pyrimidin-4(3H)-one + 2 phosphate + 2 H(+). Functionally, catalyzes the formation of 2-amino-5-formylamino-6-ribofuranosylamino-4(3H)-pyrimidinone ribonucleotide monophosphate and inorganic phosphate from GTP. Also has an independent pyrophosphate phosphohydrolase activity. This chain is GTP cyclohydrolase III, found in Pyrobaculum neutrophilum (strain DSM 2338 / JCM 9278 / NBRC 100436 / V24Sta) (Thermoproteus neutrophilus).